The chain runs to 447 residues: Asparagine--tRNA ligase (447 aa).

The protein belongs to the class-II aminoacyl-tRNA synthetase family. Homodimer.

It localises to the cytoplasm. The catalysed reaction is tRNA(Asn) + L-asparagine + ATP = L-asparaginyl-tRNA(Asn) + AMP + diphosphate + H(+). The polypeptide is Asparagine--tRNA ligase (Streptococcus pneumoniae serotype 4 (strain ATCC BAA-334 / TIGR4)).